Reading from the N-terminus, the 448-residue chain is Homogentisate 1,2-dioxygenase (448 aa).

Catalysis depends on histidine 302, which acts as the Proton acceptor. 2 residues coordinate Fe cation: histidine 345 and glutamate 351. The homogentisate site is built by tyrosine 360 and histidine 381. Histidine 381 is a binding site for Fe cation.

Belongs to the homogentisate dioxygenase family. Hexamer; dimer of trimers. The cofactor is Fe cation.

The enzyme catalyses homogentisate + O2 = 4-maleylacetoacetate + H(+). Its pathway is amino-acid degradation; L-phenylalanine degradation; acetoacetate and fumarate from L-phenylalanine: step 4/6. Functionally, involved in the catabolism of homogentisate (2,5-dihydroxyphenylacetate or 2,5-OH-PhAc), a central intermediate in the degradation of phenylalanine and tyrosine. Catalyzes the oxidative ring cleavage of the aromatic ring of homogentisate to yield maleylacetoacetate. This Ralstonia pickettii (strain 12J) protein is Homogentisate 1,2-dioxygenase.